Consider the following 227-residue polypeptide: UPF0173 metal-dependent hydrolase BPUM_2573 (227 aa).

This sequence belongs to the UPF0173 family.

This chain is UPF0173 metal-dependent hydrolase BPUM_2573, found in Bacillus pumilus (strain SAFR-032).